A 509-amino-acid chain; its full sequence is MPSGFQQIGSEDGEPPRQRVTGTLVLAVFSAVLGSLQFGYNIGVINAPQKVIEQSYNETWLGRQGPEGPGSIPPGTLTTLWALSVAIFSVGGMISSFLIGIISQWLGRKRAMLFNNALAVLGGTLMGLAKAAASYEMLILGRFFIGAYSGLTSGLVPMYVGEIAPTHLRGALGTLNQLAIVTGILIAQVLGLESMLGTATLWPLLLGITVLPALLQMVLLPLCPESPRYLYIIRNLEGPARKSLKRLTGWADVSEVLAELKEEKRKLERERPLSLLQLLGSHTHRQPLVIAIVLQLSQQLSGINAVFYYSTSIFESAGVEKPAYATIGAGVVNTVFTLVSVFLVERAGRRTLHLLGLAGMCGCAILMTVALLLLERVPAMSYVSIVAIFGFVAFFEIGPGPIPWFIVAELFSQGPRPAAMAVAGFSNWTCNFIIGMGFQYVADAMGPYVFLLFAVLLLGFFIFTFLKVPETRGRTFDQISAVFHRTPSLLEQEVKPSTELEYLGPDEHD.

Residues 1 to 24 (MPSGFQQIGSEDGEPPRQRVTGTL) are Cytoplasmic-facing. Positions 7–13 (QIGSEDG) are interaction with SRFBP1. S10 is subject to Phosphoserine. A helical membrane pass occupies residues 25 to 45 (VLAVFSAVLGSLQFGYNIGVI). Topologically, residues 46 to 81 (NAPQKVIEQSYNETWLGRQGPEGPGSIPPGTLTTLW) are extracellular. An N-linked (GlcNAc...) asparagine glycan is attached at N57. The helical transmembrane segment at 82–102 (ALSVAIFSVGGMISSFLIGII) threads the bilayer. Residues 103-111 (SQWLGRKRA) are Cytoplasmic-facing. Residues 112–132 (MLFNNALAVLGGTLMGLAKAA) traverse the membrane as a helical segment. Over 133–142 (ASYEMLILGR) the chain is Extracellular. The chain crosses the membrane as a helical span at residues 143-163 (FFIGAYSGLTSGLVPMYVGEI). The Cytoplasmic portion of the chain corresponds to 164–171 (APTHLRGA). The chain crosses the membrane as a helical span at residues 172–192 (LGTLNQLAIVTGILIAQVLGL). Q177 contacts D-glucose. Residues 193-200 (ESMLGTAT) are Extracellular-facing. Residues 201–221 (LWPLLLGITVLPALLQMVLLP) traverse the membrane as a helical segment. The Cytoplasmic segment spans residues 222-287 (LCPESPRYLY…LLGSHTHRQP (66 aa)). C223 carries the S-palmitoyl cysteine lipid modification. Residue S274 is modified to Phosphoserine; by SGK1. Residues 288-308 (LVIAIVLQLSQQLSGINAVFY) form a helical membrane-spanning segment. Residues 298 to 299 (QQ) and N304 contribute to the D-glucose site. The Extracellular segment spans residues 309-323 (YSTSIFESAGVEKPA). A helical transmembrane segment spans residues 324-344 (YATIGAGVVNTVFTLVSVFLV). N333 lines the D-glucose pocket. Residues 345 to 353 (ERAGRRTLH) are Cytoplasmic-facing. A helical transmembrane segment spans residues 354-374 (LLGLAGMCGCAILMTVALLLL). Over 375 to 384 (ERVPAMSYVS) the chain is Extracellular. A helical transmembrane segment spans residues 385 to 405 (IVAIFGFVAFFEIGPGPIPWF). Residues E396 and W404 each coordinate D-glucose. Residues 406–417 (IVAELFSQGPRP) lie on the Cytoplasmic side of the membrane. A helical membrane pass occupies residues 418-438 (AAMAVAGFSNWTCNFIIGMGF). Over 439–445 (QYVADAM) the chain is Extracellular. A helical membrane pass occupies residues 446-466 (GPYVFLLFAVLLLGFFIFTFL). The Cytoplasmic segment spans residues 467-509 (KVPETRGRTFDQISAVFHRTPSLLEQEVKPSTELEYLGPDEHD). A Phosphothreonine modification is found at T486. At S488 the chain carries Phosphoserine. Residues 489 to 490 (LL) carry the Dileucine internalization motif motif.

It belongs to the major facilitator superfamily. Sugar transporter (TC 2.A.1.1) family. Glucose transporter subfamily. As to quaternary structure, binds to DAXX. Interacts via its N-terminus with SRFBP1. Interacts with NDUFA9. Interacts with TRARG1; the interaction is required for proper SLC2A4 recycling after insulin stimulation. Post-translationally, sumoylated. In terms of processing, palmitoylated. Palmitoylation by ZDHHC7 controls the insulin-dependent translocation of GLUT4 to the plasma membrane.

The protein localises to the cell membrane. The protein resides in the endomembrane system. It is found in the cytoplasm. Its subcellular location is the perinuclear region. It carries out the reaction D-glucose(out) = D-glucose(in). In terms of biological role, insulin-regulated facilitative glucose transporter, which plays a key role in removal of glucose from circulation. Response to insulin is regulated by its intracellular localization: in the absence of insulin, it is efficiently retained intracellularly within storage compartments in muscle and fat cells. Upon insulin stimulation, translocates from these compartments to the cell surface where it transports glucose from the extracellular milieu into the cell. This chain is Solute carrier family 2, facilitated glucose transporter member 4, found in Bos taurus (Bovine).